Here is a 55-residue protein sequence, read N- to C-terminus: Protein SOX-19 (55 aa).

A DNA-binding region (HMG box) is located at residues 1–55 (MVWSQIERRKIMEQWPDMHNAEISKRLGKRWKLLPDYEKIPFIKEAERLRLKHMA).

It is found in the nucleus. The chain is Protein SOX-19 (Sox19) from Mus musculus (Mouse).